The sequence spans 138 residues: DASH complex subunit DAD2 (138 aa).

The segment covering 1–14 (MSGFSSRPLSTHLR) has biased composition (polar residues). 2 disordered regions span residues 1–25 (MSGF…QGQS) and 116–138 (PTEH…SGRG).

The protein belongs to the DASH complex DAD2 family. In terms of assembly, component of the DASH complex consisting of ASK1, DAD1, DAD2, DAD3, DAD4, DAM1, DUO1, HSK3, SPC19 and SPC34, with a stoichiometry of one copy of each subunit per complex. Multiple DASH complexes oligomerize to form a ring that encircles spindle microtubules and organizes the rod-like NDC80 complexes of the outer kinetochore. DASH complex oligomerization strengthens microtubule attachments. On cytoplasmic microtubules, DASH complexes appear to form patches instead of rings.

Its subcellular location is the chromosome. The protein resides in the centromere. The protein localises to the kinetochore. It is found in the cytoplasm. It localises to the cytoskeleton. Its subcellular location is the spindle. The protein resides in the nucleus. In terms of biological role, component of the DASH complex that connects microtubules with kinetochores and couples microtubule depolymerisation to chromosome movement; it is involved in retrieving kinetochores to the spindle poles before their re-orientation on the spindle in early mitosis and allows microtubule depolymerization to pull chromosomes apart and resist detachment during anaphase. Kinetochores, consisting of a centromere-associated inner segment and a microtubule-contacting outer segment, play a crucial role in chromosome segregation by mediating the physical connection between centromeric DNA and microtubules. Kinetochores also serve as an input point for the spindle assembly checkpoint, which delays anaphase until all chromosomes have bioriented on the mitotic spindle. The polypeptide is DASH complex subunit DAD2 (Chaetomium thermophilum (strain DSM 1495 / CBS 144.50 / IMI 039719) (Thermochaetoides thermophila)).